The chain runs to 334 residues: Ornithine carbamoyltransferase, catabolic (334 aa).

Carbamoyl phosphate contacts are provided by residues 57 to 60 (STRT), Q84, R108, and 135 to 138 (HPTQ). L-ornithine contacts are provided by residues N168, D232, and 236–237 (SM). Residues 274 to 275 (CL) and R321 each bind carbamoyl phosphate.

It belongs to the aspartate/ornithine carbamoyltransferase superfamily. OTCase family.

The protein localises to the cytoplasm. The enzyme catalyses carbamoyl phosphate + L-ornithine = L-citrulline + phosphate + H(+). The protein operates within amino-acid degradation; L-arginine degradation via ADI pathway; carbamoyl phosphate from L-arginine: step 2/2. Its function is as follows. Reversibly catalyzes the transfer of the carbamoyl group from carbamoyl phosphate (CP) to the N(epsilon) atom of ornithine (ORN) to produce L-citrulline. This is Ornithine carbamoyltransferase, catabolic (arcB) from Avibacterium paragallinarum (Haemophilus gallinarum).